Reading from the N-terminus, the 239-residue chain is Transcriptional regulatory protein BtsR (239 aa).

The 114-residue stretch at Lys-3–Arg-116 folds into the Response regulatory domain. Asp-54 is subject to 4-aspartylphosphate. Residues Ile-137–Leu-239 form the HTH LytTR-type domain.

In terms of processing, phosphorylated by BtsS.

Its function is as follows. Member of the two-component regulatory system BtsS/BtsR. BtsR regulates expression of btsT by binding to its promoter region. This chain is Transcriptional regulatory protein BtsR, found in Shigella flexneri.